Consider the following 120-residue polypeptide: Large ribosomal subunit protein eL18 (120 aa).

The protein belongs to the eukaryotic ribosomal protein eL18 family.

This Thermoplasma acidophilum (strain ATCC 25905 / DSM 1728 / JCM 9062 / NBRC 15155 / AMRC-C165) protein is Large ribosomal subunit protein eL18.